A 200-amino-acid chain; its full sequence is Segregation and condensation protein B (200 aa).

The protein belongs to the ScpB family. In terms of assembly, homodimer. Homodimerization may be required to stabilize the binding of ScpA to the Smc head domains. Component of a cohesin-like complex composed of ScpA, ScpB and the Smc homodimer, in which ScpA and ScpB bind to the head domain of Smc. The presence of the three proteins is required for the association of the complex with DNA.

It localises to the cytoplasm. Its function is as follows. Participates in chromosomal partition during cell division. May act via the formation of a condensin-like complex containing Smc and ScpA that pull DNA away from mid-cell into both cell halves. The chain is Segregation and condensation protein B from Lactobacillus delbrueckii subsp. bulgaricus (strain ATCC 11842 / DSM 20081 / BCRC 10696 / JCM 1002 / NBRC 13953 / NCIMB 11778 / NCTC 12712 / WDCM 00102 / Lb 14).